The primary structure comprises 595 residues: Probable serine/threonine-protein kinase fhkC (595 aa).

Positions 1–84 are disordered; it reads MNSNKEETTA…MTEDNSKEED (84 aa). Residues 18 to 31 are compositionally biased toward low complexity; the sequence is EEQQQQQQPQQQEQ. Residues 32–49 are compositionally biased toward polar residues; sequence INTTTASTTSNGENTASD. Residues 50-70 show a composition bias toward low complexity; sequence NNNNSNNNNNNNTNNTNTNNN. Residues 116–170 enclose the FHA domain; it reads IILGRSKGVCNYTFTSPTVSGKHCKIYRDPTVKSRNVAFVDDTSTNGTFINNEVI. A Protein kinase domain is found at 218-479; that stretch reads YDLREVLGTG…IDQALNHPWF (262 aa). ATP is bound by residues 224-232 and lysine 247; that span reads LGTGNFASV. The active-site Proton acceptor is aspartate 342. Residue threonine 377 is modified to Phosphothreonine; by autocatalysis. The tract at residues 494-595 is disordered; the sequence is KLEFPPPSTN…DEHEQKKVKN (102 aa). Residues 508 to 520 show a composition bias toward polar residues; it reads PTPNTTSSNSQLV. Low complexity predominate over residues 530–567; sequence DNTTDNNNNNNNNNNNNNNNNNNNTTNNSNNIDNNNGN. Over residues 585–595 the composition is skewed to basic and acidic residues; the sequence is NDEHEQKKVKN.

The protein belongs to the protein kinase superfamily. CAMK Ser/Thr protein kinase family. CHK2 subfamily.

It catalyses the reaction L-seryl-[protein] + ATP = O-phospho-L-seryl-[protein] + ADP + H(+). The catalysed reaction is L-threonyl-[protein] + ATP = O-phospho-L-threonyl-[protein] + ADP + H(+). The polypeptide is Probable serine/threonine-protein kinase fhkC (fhkC) (Dictyostelium discoideum (Social amoeba)).